A 304-amino-acid polypeptide reads, in one-letter code: Dihydroorotate dehydrogenase B (NAD(+)), catalytic subunit (304 aa).

FMN-binding positions include serine 22 and 46–47 (KG). Substrate contacts are provided by residues lysine 46 and 70–74 (NSIGL). The FMN site is built by asparagine 100 and asparagine 128. Position 128 (asparagine 128) interacts with substrate. Cysteine 131 serves as the catalytic Nucleophile. Residues lysine 166 and isoleucine 192 each contribute to the FMN site. 193–194 (NT) contributes to the substrate binding site. Residues glycine 218, 244 to 245 (GG), and 266 to 267 (GT) contribute to the FMN site.

Belongs to the dihydroorotate dehydrogenase family. Type 1 subfamily. In terms of assembly, heterotetramer of 2 PyrK and 2 PyrD type B subunits. However, the metal reductase complex seems to be composed of a heterooctamer of 4 PyrK and 4 PyrD subunits. The cofactor is FMN.

It is found in the cytoplasm. It catalyses the reaction (S)-dihydroorotate + NAD(+) = orotate + NADH + H(+). It participates in pyrimidine metabolism; UMP biosynthesis via de novo pathway; orotate from (S)-dihydroorotate (NAD(+) route): step 1/1. In terms of biological role, catalyzes the conversion of dihydroorotate to orotate with NAD(+) as electron acceptor. Together with PyrK, also forms a metal reductase complex able to reduce Fe(III)-chelates to Fe(II)-chelates, as well as soluble Cr(VI) and U(VI), using NADH as electron donor. To a lesser extent, can also use NADPH as an electron donor. Is unable to reduce riboflavin and FMN with NADH as electron donor. May have an in vivo role in metal reduction in D.reducens, which is an organism capable of reducing contaminant heavy metals and radionuclides. This is Dihydroorotate dehydrogenase B (NAD(+)), catalytic subunit (pyrD) from Desulforamulus reducens (strain ATCC BAA-1160 / DSM 100696 / MI-1) (Desulfotomaculum reducens).